The sequence spans 2022 residues: Transient receptor potential cation channel subfamily M member 6 (2022 aa).

Residues 1 to 741 (MKEQPVLERL…MWMGRLKMRK (741 aa)) are Cytoplasmic-facing. A helical transmembrane segment spans residues 742–762 (NSWLKIIISIILPPTILTLEF). The Extracellular segment spans residues 763-841 (KSKAEMSHVP…YEFYSAPIVK (79 aa)). The helical transmembrane segment at 842–862 (FWFYTMAYLAFLMLFTYTVLV) threads the bilayer. Over 863 to 905 (EMQPQPSVQEWLVSIYIFTNAIEVVREICISEPGKFTQKVKVW) the chain is Cytoplasmic. A helical transmembrane segment spans residues 906–926 (ISEYWNLTETVAIGLFSAGFV). Residues 927 to 939 (LRWGDPPFHTAGR) lie on the Extracellular side of the membrane. A helical transmembrane segment spans residues 940 to 960 (LIYCIDIIFWFSRLLDFFAVN). At 961–972 (QHAGPYVTMIAK) the chain is on the cytoplasmic side. A helical transmembrane segment spans residues 973-993 (MTANMFYIVIIMAIVLLSFGV). Residues 994-1012 (ARKAILSPKEPPSWSLARD) lie on the Extracellular side of the membrane. An intramembrane region (pore-forming) is located at residues 1013 to 1033 (IVFEPYWMIYGEVYAGEIDVC). The Extracellular portion of the chain corresponds to 1034–1047 (SSQPSCPPGSFLTP). A helical membrane pass occupies residues 1048–1068 (FLQAVYLFVQYIIMVNLLIAF). At 1069–2022 (FNNVYLDMES…RNSPEDDMQL (954 aa)) the chain is on the cytoplasmic side. Residues 1479–1516 (TCDSDSSRSEQHQKQAQDSSLSDNSTRSAQSSECSEVG) are disordered. The segment covering 1483-1493 (DSSRSEQHQKQ) has biased composition (basic and acidic residues). Residues 1494–1512 (AQDSSLSDNSTRSAQSSEC) are compositionally biased toward polar residues. The 231-residue stretch at 1750 to 1980 (NLDKSMSSWS…CCRKLKLPDL (231 aa)) folds into the Alpha-type protein kinase domain. Positions 1777, 1778, 1779, 1780, and 1804 each coordinate ADP. T1851 carries the post-translational modification Phosphothreonine; by autocatalysis. ADP is bound by residues E1876 and M1879. Position 1909 (H1909) interacts with Zn(2+). D1923 serves as the catalytic Proton acceptor. Residue D1933 coordinates ADP. Zn(2+)-binding residues include H1966, C1968, and C1972. The segment at 1997-2022 (EIKIESAEEPPARETGRNSPEDDMQL) is disordered. Residues 1998-2016 (IKIESAEEPPARETGRNSP) are compositionally biased toward basic and acidic residues.

This sequence in the C-terminal section; belongs to the protein kinase superfamily. Alpha-type protein kinase family. ALPK subfamily. The protein in the N-terminal section; belongs to the transient receptor (TC 1.A.4) family. LTrpC subfamily. TRPM6 sub-subfamily. In terms of assembly, homomers. Forms heteromers with TRPM7; TRPM6 increases the current amplitude of TRPM6/7 heteromers as compared to TRPM7 homomer. Interacts (via kinase domain) with RACK1. Autophosphorylated; autophosphorylation controlls the protein kinase activity of TRPM6 towards their substrates. Autophosphorylation of Thr-1851 in the kinase domain is essential for the inhibitory effect of RACK1. In terms of processing, the C-terminus of TRPM6 is proteolytically cleaved in vivo, in a cell type-specific fashion, releasing the kinase module from the transmembrane domain. The cleaved kinase fragments are translocated to the nucleus to phosphorylate histones and regulate gene expression. In terms of tissue distribution, highly expressed in kidney and colon. Isoform TRPM6a and isoform TRPM6b, are coexpressed with TRPM7 in kidney, and testis, and are also found in several cell lines of lung origin. Isoform TRPM6c is detected only in testis and in NCI-H510A small cell lung carcinoma cells.

Its subcellular location is the cell membrane. It localises to the apical cell membrane. The protein localises to the nucleus. It carries out the reaction L-seryl-[protein] + ATP = O-phospho-L-seryl-[protein] + ADP + H(+). It catalyses the reaction L-threonyl-[protein] + ATP = O-phospho-L-threonyl-[protein] + ADP + H(+). The catalysed reaction is Mg(2+)(in) = Mg(2+)(out). The enzyme catalyses Ca(2+)(in) = Ca(2+)(out). It carries out the reaction Zn(2+)(in) = Zn(2+)(out). With respect to regulation, strongly inhibited by intracellular Mg(2+); unlikely to be active at physiological levels of intracellular Mg(2+). In the heteromeric TRPM6-TRPM7 channels complexes, TRPM7 are able to offset the very high sensitivity of TRPM6 to cytosolic Mg(2+) to physiologically relevant concentrations, whereas TRPM6 relieve TRPM7 from the inhibitory action of Mg-ATP. Consequently, the association of TRPM6 with TRPM7 allow for high constitutive activity of TRPM6/7 in the presence of physiological levels of Mg(2+) and Mg-ATP. The kinase activity is controlled through the autophosphorylation of a serine/threonine-rich region located to the N-terminal of the catalytic domain. In terms of biological role, bifunctional protein that combines an ion channel with an intrinsic kinase domain, enabling it to modulate cellular functions either by conducting ions through the pore or by phosphorylating downstream proteins via its kinase domain. Crucial for Mg(2+) homeostasis. Has an important role in epithelial Mg(2+) transport and in the active Mg(2+) absorption in the gut and kidney. However, whether TRPM6 forms functional homomeric channels by itself or functions primarily as a subunit of heteromeric TRPM6-TRPM7 channels, is still under debate. Functionally, the C-terminal kinase domain can be cleaved from the channel segment in a cell-type-specific fashion. The cleaved kinase fragments can translocate to the nucleus, and bind chromatin-remodeling complex proteins to ultimately phosphorylate specific Ser/Thr residues of histones known to be functionally important for cell differentiation and development. This is Transient receptor potential cation channel subfamily M member 6 (TRPM6) from Homo sapiens (Human).